A 388-amino-acid chain; its full sequence is Succinate--CoA ligase [ADP-forming] subunit beta (388 aa).

An ATP-grasp domain is found at 9–244 (KQLFAEFGLP…PSQEDEREAH (236 aa)). ATP contacts are provided by residues lysine 46, 53 to 55 (GRG), glutamate 99, serine 102, and glutamate 107. 2 residues coordinate Mg(2+): asparagine 199 and aspartate 213. Substrate is bound by residues asparagine 264 and 321-323 (GIV).

This sequence belongs to the succinate/malate CoA ligase beta subunit family. As to quaternary structure, heterotetramer of two alpha and two beta subunits. Mg(2+) serves as cofactor.

The catalysed reaction is succinate + ATP + CoA = succinyl-CoA + ADP + phosphate. The enzyme catalyses GTP + succinate + CoA = succinyl-CoA + GDP + phosphate. It participates in carbohydrate metabolism; tricarboxylic acid cycle; succinate from succinyl-CoA (ligase route): step 1/1. Its function is as follows. Succinyl-CoA synthetase functions in the citric acid cycle (TCA), coupling the hydrolysis of succinyl-CoA to the synthesis of either ATP or GTP and thus represents the only step of substrate-level phosphorylation in the TCA. The beta subunit provides nucleotide specificity of the enzyme and binds the substrate succinate, while the binding sites for coenzyme A and phosphate are found in the alpha subunit. The chain is Succinate--CoA ligase [ADP-forming] subunit beta from Vibrio campbellii (strain ATCC BAA-1116).